The primary structure comprises 67 residues: Protein AaeX (67 aa).

2 helical membrane-spanning segments follow: residues 3–23 and 47–67; these read LFPV…ELLL and PALF…RLFV.

It belongs to the AaeX family.

The protein localises to the cell membrane. This chain is Protein AaeX, found in Escherichia coli O157:H7.